We begin with the raw amino-acid sequence, 115 residues long: Anamorsin homolog 2 (115 aa).

Positions 30–115 (VKEATKGEDC…KVKLNLTDDI (86 aa)) are disordered. [2Fe-2S] cluster is bound by residues cysteine 39, cysteine 46, cysteine 49, and cysteine 51. Residues 39–51 (CTTRRRACKNCTC) form a fe-S binding site A region. Cysteine 77, cysteine 80, cysteine 88, and cysteine 91 together coordinate [4Fe-4S] cluster. Short sequence motifs (cx2C motif) lie at residues 77-80 (CGNC) and 88-91 (CATC). Residues 77–91 (CGNCAKGDAFRCATC) are fe-S binding site B.

Belongs to the anamorsin family. In terms of assembly, monomer. [2Fe-2S] cluster is required as a cofactor. Requires [4Fe-4S] cluster as cofactor.

Its subcellular location is the cytoplasm. It localises to the mitochondrion intermembrane space. Functionally, component of the cytosolic iron-sulfur (Fe-S) protein assembly (CIA) machinery. Required for the maturation of extramitochondrial Fe-S proteins. Part of an electron transfer chain functioning in an early step of cytosolic Fe-S biogenesis, facilitating the de novo assembly of a [4Fe-4S] cluster on the cytosolic Fe-S scaffold complex. Electrons are transferred from NADPH via a FAD- and FMN-containing diflavin oxidoreductase. Together with the diflavin oxidoreductase, also required for the assembly of the diferric tyrosyl radical cofactor of ribonucleotide reductase (RNR), probably by providing electrons for reduction during radical cofactor maturation in the catalytic small subunit. This Trypanosoma cruzi (strain CL Brener) protein is Anamorsin homolog 2.